The sequence spans 116 residues: Protein V2 (116 aa).

This sequence belongs to the geminiviridae protein AV2/V2 family. In terms of assembly, interacts with host SGS3.

It localises to the host cytoplasm. Its subcellular location is the host perinuclear region. Its function is as follows. Through its interaction with host SGS3, acts as a suppressor of RNA-mediated gene silencing, also known as post-transcriptional gene silencing (PTGS), a mechanism of plant viral defense that limits the accumulation of viral RNAs. The polypeptide is Protein V2 (Tomato yellow leaf curl virus (strain Israel) (TYLCV)).